Reading from the N-terminus, the 196-residue chain is Peptidyl-tRNA hydrolase (196 aa).

Position 17 (tyrosine 17) interacts with tRNA. Catalysis depends on histidine 22, which acts as the Proton acceptor. The tRNA site is built by phenylalanine 68, asparagine 70, and asparagine 116.

It belongs to the PTH family. Monomer.

Its subcellular location is the cytoplasm. The catalysed reaction is an N-acyl-L-alpha-aminoacyl-tRNA + H2O = an N-acyl-L-amino acid + a tRNA + H(+). Its function is as follows. Hydrolyzes ribosome-free peptidyl-tRNAs (with 1 or more amino acids incorporated), which drop off the ribosome during protein synthesis, or as a result of ribosome stalling. In terms of biological role, catalyzes the release of premature peptidyl moieties from peptidyl-tRNA molecules trapped in stalled 50S ribosomal subunits, and thus maintains levels of free tRNAs and 50S ribosomes. This chain is Peptidyl-tRNA hydrolase, found in Yersinia pseudotuberculosis serotype O:1b (strain IP 31758).